A 332-amino-acid polypeptide reads, in one-letter code: Ketol-acid reductoisomerase (NADP(+)) (332 aa).

The KARI N-terminal Rossmann domain maps to 4–184 (ARMYYDEDAD…GGTRAGILET (181 aa)). Residues 27–30 (YGSQ), Ser-53, Ser-55, and 85–88 (DEVQ) each bind NADP(+). The active site involves His-110. An NADP(+)-binding site is contributed by Gly-136. The region spanning 185–330 (TFREEAETDL…ADLRKMMSWL (146 aa)) is the KARI C-terminal knotted domain. Positions 193, 197, 229, and 233 each coordinate Mg(2+). Ser-254 is a substrate binding site.

Belongs to the ketol-acid reductoisomerase family. Mg(2+) serves as cofactor.

The catalysed reaction is (2R)-2,3-dihydroxy-3-methylbutanoate + NADP(+) = (2S)-2-acetolactate + NADPH + H(+). It catalyses the reaction (2R,3R)-2,3-dihydroxy-3-methylpentanoate + NADP(+) = (S)-2-ethyl-2-hydroxy-3-oxobutanoate + NADPH + H(+). It participates in amino-acid biosynthesis; L-isoleucine biosynthesis; L-isoleucine from 2-oxobutanoate: step 2/4. It functions in the pathway amino-acid biosynthesis; L-valine biosynthesis; L-valine from pyruvate: step 2/4. Its function is as follows. Involved in the biosynthesis of branched-chain amino acids (BCAA). Catalyzes an alkyl-migration followed by a ketol-acid reduction of (S)-2-acetolactate (S2AL) to yield (R)-2,3-dihydroxy-isovalerate. In the isomerase reaction, S2AL is rearranged via a Mg-dependent methyl migration to produce 3-hydroxy-3-methyl-2-ketobutyrate (HMKB). In the reductase reaction, this 2-ketoacid undergoes a metal-dependent reduction by NADPH to yield (R)-2,3-dihydroxy-isovalerate. The polypeptide is Ketol-acid reductoisomerase (NADP(+)) (Gloeobacter violaceus (strain ATCC 29082 / PCC 7421)).